The primary structure comprises 297 residues: Ribosomal RNA small subunit methyltransferase H (297 aa).

Residues 37–39 (GGH), Glu-56, Phe-87, Asp-102, and His-109 contribute to the S-adenosyl-L-methionine site.

This sequence belongs to the methyltransferase superfamily. RsmH family.

It is found in the cytoplasm. The catalysed reaction is cytidine(1402) in 16S rRNA + S-adenosyl-L-methionine = N(4)-methylcytidine(1402) in 16S rRNA + S-adenosyl-L-homocysteine + H(+). In terms of biological role, specifically methylates the N4 position of cytidine in position 1402 (C1402) of 16S rRNA. In Borrelia hermsii (strain HS1 / DAH), this protein is Ribosomal RNA small subunit methyltransferase H.